A 164-amino-acid polypeptide reads, in one-letter code: 3-dehydroquinate dehydratase (164 aa).

The active-site Proton acceptor is tyrosine 22. Positions 73, 79, and 86 each coordinate substrate. The active-site Proton donor is histidine 99. Residues 100 to 101 (IS) and arginine 110 each bind substrate.

Belongs to the type-II 3-dehydroquinase family. Homododecamer.

The catalysed reaction is 3-dehydroquinate = 3-dehydroshikimate + H2O. It functions in the pathway metabolic intermediate biosynthesis; chorismate biosynthesis; chorismate from D-erythrose 4-phosphate and phosphoenolpyruvate: step 3/7. In terms of biological role, catalyzes a trans-dehydration via an enolate intermediate. The chain is 3-dehydroquinate dehydratase from Aliarcobacter butzleri (strain RM4018) (Arcobacter butzleri).